The following is a 37-amino-acid chain: Large ribosomal subunit protein bL36 (37 aa).

Belongs to the bacterial ribosomal protein bL36 family.

This chain is Large ribosomal subunit protein bL36, found in Methylibium petroleiphilum (strain ATCC BAA-1232 / LMG 22953 / PM1).